The primary structure comprises 102 residues: Large ribosomal subunit protein bL21 (102 aa).

It belongs to the bacterial ribosomal protein bL21 family. As to quaternary structure, part of the 50S ribosomal subunit. Contacts protein L20.

This protein binds to 23S rRNA in the presence of protein L20. The polypeptide is Large ribosomal subunit protein bL21 (Bifidobacterium longum subsp. infantis (strain ATCC 15697 / DSM 20088 / JCM 1222 / NCTC 11817 / S12)).